The chain runs to 636 residues: Molybdenum cofactor biosynthesis protein 1 (636 aa).

The molybdenum cofactor biosynthesis protein A stretch occupies residues 1-383; it reads MAARPLSRML…QMKNRPMILI (383 aa). Ser-64 is modified (phosphoserine). In terms of domain architecture, Radical SAM core spans 64–277; that stretch reads SFGRQHSYLR…LDTVRQQWPE (214 aa). Arg-73 is a GTP binding site. [4Fe-4S] cluster contacts are provided by Cys-80 and Cys-84. Tyr-86 is a binding site for S-adenosyl-L-methionine. Residue Cys-87 participates in [4Fe-4S] cluster binding. Residue Arg-123 coordinates GTP. An S-adenosyl-L-methionine-binding site is contributed by Gly-127. Thr-154 serves as a coordination point for GTP. Position 178 (Ser-178) interacts with S-adenosyl-L-methionine. Lys-198 carries the post-translational modification N6-acetyllysine. Residue Lys-215 participates in GTP binding. Residue Met-249 coordinates S-adenosyl-L-methionine. Residues Cys-312 and Cys-315 each coordinate [4Fe-4S] cluster. 317–319 is a binding site for GTP; that stretch reads RLR. Cys-329 contacts [4Fe-4S] cluster. Positions 414 to 636 are molybdenum cofactor biosynthesis protein C; it reads MSFSSQVATL…GGQRGDFHRA (223 aa). The tract at residues 456 to 480 is disordered; sequence DANSKCLSPGSWASAAPSGPQLTSE. Over residues 463–475 the composition is skewed to low complexity; that stretch reads SPGSWASAAPSGP. Position 528 is an N6-acetyllysine (Lys-528). Asp-606 (for molybdenum cofactor biosynthesis protein C activity) is an active-site residue.

This sequence in the C-terminal section; belongs to the MoaC family. In the N-terminal section; belongs to the radical SAM superfamily. MoaA family. As to quaternary structure, isoform MOCS1A and isoform MOCS1B probably form a heterooligomer. [4Fe-4S] cluster serves as cofactor. As to expression, isoform MOCS1A and isoform 2 are widely expressed.

The enzyme catalyses GTP + AH2 + S-adenosyl-L-methionine = (8S)-3',8-cyclo-7,8-dihydroguanosine 5'-triphosphate + 5'-deoxyadenosine + L-methionine + A + H(+). The catalysed reaction is (8S)-3',8-cyclo-7,8-dihydroguanosine 5'-triphosphate = cyclic pyranopterin phosphate + diphosphate. It functions in the pathway cofactor biosynthesis; molybdopterin biosynthesis. Isoform MOCS1A and isoform MOCS1B probably form a complex that catalyzes the conversion of 5'-GTP to cyclic pyranopterin monophosphate (cPMP). MOCS1A catalyzes the cyclization of GTP to (8S)-3',8-cyclo-7,8-dihydroguanosine 5'-triphosphate and MOCS1B catalyzes the subsequent conversion of (8S)-3',8-cyclo-7,8-dihydroguanosine 5'-triphosphate to cPMP. The chain is Molybdenum cofactor biosynthesis protein 1 (MOCS1) from Homo sapiens (Human).